Reading from the N-terminus, the 138-residue chain is MLKEFQEFALKGNMVDLAIGVIIGGAFGGLVNSIVNDIIMPIIGLITGGIDFSNMFIQLAGDPKTTLAAAREAGATIAYGNFITLLINFLIIAWVLFLVVKLMNRLKKREEAKPAPAAPSEEVLLTEIRDILAKQQKA.

3 consecutive transmembrane segments (helical) span residues 15-35, 38-58, and 80-100; these read VDLAIGVIIGGAFGGLVNSIV, IIMPIIGLITGGIDFSNMFIQ, and GNFITLLINFLIIAWVLFLVV.

The protein belongs to the MscL family. As to quaternary structure, homopentamer.

It is found in the cell inner membrane. Functionally, channel that opens in response to stretch forces in the membrane lipid bilayer. May participate in the regulation of osmotic pressure changes within the cell. This chain is Large-conductance mechanosensitive channel, found in Brucella canis (strain ATCC 23365 / NCTC 10854 / RM-666).